The primary structure comprises 624 residues: Capsid protein p87 (624 aa).

Disordered regions lie at residues 183 to 208 (FADTESAPRTQTADNSPPPVSEQDFD), 254 to 326 (STPL…TPVS), and 341 to 410 (TDLP…QKRR). The stretch at 256 to 268 (PLQEYQMPPQTPA) is one A-1 repeat. The interval 256 to 280 (PLQEYQMPPQTPAPLQDQMPPQTPA) is 2 X 13 AA tandem repeats, motif A. One copy of the A-2 repeat lies at 269–280 (PLQDQMPPQTPA). Over residues 279–324 (PAYATPAQQPSQPTPAQTPAQQPSQPTPAYVTSAQTPAQQPSQPTP) the composition is skewed to low complexity. One copy of the B-1 repeat lies at 283 to 293 (TPAQQPSQPTP). A 3 X 11 AA repeats, motif B region spans residues 283-324 (TPAQQPSQPTPAQTPAQQPSQPTPAYVTSAQTPAQQPSQPTP). The stretch at 296–306 (TPAQQPSQPTP) is one B-2 repeat. The B-3 repeat unit spans residues 314 to 324 (TPAQQPSQPTP).

It localises to the virion. The chain is Capsid protein p87 (P87) from Orgyia pseudotsugata multicapsid polyhedrosis virus (OpMNPV).